A 772-amino-acid polypeptide reads, in one-letter code: Potassium transporter 24 (772 aa).

The Cytoplasmic segment spans residues Met-1 to Ala-23. The helical transmembrane segment at Val-24 to Val-44 threads the bilayer. The Extracellular segment spans residues Tyr-45–Ala-66. The helical transmembrane segment at Leu-67 to Leu-87 threads the bilayer. The Cytoplasmic portion of the chain corresponds to Arg-88–Arg-150. The helical transmembrane segment at Leu-151–Pro-171 threads the bilayer. At Ala-172–Lys-192 the chain is on the extracellular side. The helical transmembrane segment at Tyr-193 to Gly-213 threads the bilayer. The Cytoplasmic segment spans residues Thr-214–Arg-216. Residues Val-217–Val-237 form a helical membrane-spanning segment. Residues Tyr-238–Thr-265 lie on the Extracellular side of the membrane. The chain crosses the membrane as a helical span at residues Gly-266–Ala-286. Residues Asp-287 to Met-298 are Cytoplasmic-facing. A helical transmembrane segment spans residues Ala-299 to Ile-319. Residues Ser-320 to Pro-344 lie on the Extracellular side of the membrane. A helical membrane pass occupies residues Val-345–Phe-365. The Cytoplasmic segment spans residues Ser-366–Gln-392. The chain crosses the membrane as a helical span at residues Ile-393 to Phe-413. At Arg-414–Gln-423 the chain is on the extracellular side. A helical membrane pass occupies residues Gly-424 to Leu-444. Residues Cys-445 to Ser-449 lie on the Cytoplasmic side of the membrane. The helical transmembrane segment at Ile-450 to Ala-470 threads the bilayer. Over Ser-471–Glu-477 the chain is Extracellular. Residues Gly-478 to Tyr-498 form a helical membrane-spanning segment. The Cytoplasmic segment spans residues Gly-499–Val-772. The segment at Glu-656 to Lys-684 is disordered.

This sequence belongs to the HAK/KUP transporter (TC 2.A.72.3) family.

The protein localises to the membrane. Functionally, high-affinity potassium transporter. This Oryza sativa subsp. japonica (Rice) protein is Potassium transporter 24 (HAK24).